Reading from the N-terminus, the 1286-residue chain is ABC transporter B family member 4 (1286 aa).

The disordered stretch occupies residues 1–39; sequence MASESGLNGDPNILEEVSETKRDKEEEEEVKKTEKKDEE. Residues 18–39 show a composition bias toward basic and acidic residues; it reads SETKRDKEEEEEVKKTEKKDEE. A helical membrane pass occupies residues 60-80; it reads FLLMILGTLGSIGNGLGFPLM. Positions 63–349 constitute an ABC transmembrane type-1 1 domain; sequence MILGTLGSIG…TSPCLSAFAA (287 aa). 2 N-linked (GlcNAc...) asparagine glycosylation sites follow: N94 and N97. 5 helical membrane-spanning segments follow: residues 109 to 129, 186 to 206, 208 to 228, 288 to 308, and 317 to 337; these read FVWL…GWMI, IQLL…GWLL, LVML…AIVI, GLGL…AVWY, and GYTG…SMSL. The ABC transporter 1 domain maps to 384–620; sequence IELKDVYFTY…PEGAYSQLIR (237 aa). 419–426 contacts ATP; it reads GQSGSGKS. 2 N-linked (GlcNAc...) asparagine glycosylation sites follow: N500 and N571. The span at 625–636 shows a compositional bias: basic and acidic residues; that stretch reads KKSDENAAEEQK. The interval 625-669 is disordered; sequence KKSDENAAEEQKMSSIESFKQSSLRKSSLGRSLSKGGSSRGNSSR. Residues 646–669 show a composition bias toward low complexity; sequence SSLRKSSLGRSLSKGGSSRGNSSR. N-linked (GlcNAc...) asparagine glycosylation is present at N666. S671 carries the phosphoserine modification. The ABC transmembrane type-1 2 domain maps to 720–1007; the sequence is LILGSISAAA…SSSLSPDSSK (288 aa). 2 consecutive transmembrane segments (helical) span residues 721-741 and 764-784; these read ILGS…GILI and IIFM…TFFF. N816 and N846 each carry an N-linked (GlcNAc...) asparagine glycan. 4 helical membrane passes run 850 to 870, 871 to 891, 942 to 962, and 976 to 996; these read ILAG…VVLA, MLPL…GFSA, GIVS…SYAA, and TTFD…MAIS. Residues 1042 to 1279 enclose the ABC transporter 2 domain; sequence IELRHVSFKY…KDGVYASLVQ (238 aa). 1077-1084 is a binding site for ATP; the sequence is GESGSGKS. N-linked (GlcNAc...) asparagine glycosylation is found at N1131 and N1230.

Belongs to the ABC transporter superfamily. ABCB family. Multidrug resistance exporter (TC 3.A.1.201) subfamily. In terms of assembly, interacts with 1-naphthylphthalamic acid (NPA). In terms of processing, phosphorylation level varies significantly during early response to bacterial elicitor. As to expression, mostly expressed in roots, especially in the root elongation zone and lateral roots. In mature portion of the root, expressed in the epidermis and cortex. In the root elongation zone, confined to epidermis. In root tips, present in the root cap, S3 columella and epidermal cells.

Its subcellular location is the cell membrane. Auxin influx transporter that mediates the transport of auxin in roots. Contributes to the basipetal transport in hypocotyls and root tips by establishing an auxin uptake sink in the root cap. Confers sensitivity to 1-N-naphthylphthalamic acid (NPA). Regulates the root elongation, the initiation of lateral roots and the development of root hairs. Can transport IAA, indole-3-propionic acid, NPA syringic acid, vanillic acid and some auxin metabolites, but not 2,4-D and 1-naphthaleneacetic acid. The protein is ABC transporter B family member 4 (ABCB4) of Arabidopsis thaliana (Mouse-ear cress).